Here is a 216-residue protein sequence, read N- to C-terminus: Putative germin-like protein 2-1 (216 aa).

A signal peptide spans 1 to 21; it reads MASTWFFLLALLAVSISNAFA. Cysteine 31 and cysteine 46 form a disulfide bridge. The region spanning 60–210 is the Cupin type-1 domain; the sequence is SGLHMAGNTS…AFQVEKKIVD (151 aa). A glycan (N-linked (GlcNAc...) asparagine) is linked at asparagine 67. Mn(2+) contacts are provided by histidine 108, histidine 110, glutamate 115, and histidine 156.

It belongs to the germin family. Oligomer (believed to be a pentamer but probably hexamer).

Its subcellular location is the secreted. It is found in the extracellular space. The protein resides in the apoplast. May play a role in plant defense. Probably has no oxalate oxidase activity even if the active site is conserved. This is Putative germin-like protein 2-1 from Oryza sativa subsp. japonica (Rice).